Here is a 474-residue protein sequence, read N- to C-terminus: tRNA-2-methylthio-N(6)-dimethylallyladenosine synthase (474 aa).

The MTTase N-terminal domain occupies 3-120; it reads KKLHIKTWGC…LPEMINSVRG (118 aa). Residues Cys12, Cys49, Cys83, Cys157, Cys161, and Cys164 each contribute to the [4Fe-4S] cluster site. A Radical SAM core domain is found at 143–375; the sequence is RAEGPTAFVS…QERINQQAMA (233 aa). The TRAM domain occupies 378–441; sequence RRMLGTTQRI…PNSLRGKVVR (64 aa).

It belongs to the methylthiotransferase family. MiaB subfamily. In terms of assembly, monomer. [4Fe-4S] cluster serves as cofactor.

Its subcellular location is the cytoplasm. The catalysed reaction is N(6)-dimethylallyladenosine(37) in tRNA + (sulfur carrier)-SH + AH2 + 2 S-adenosyl-L-methionine = 2-methylsulfanyl-N(6)-dimethylallyladenosine(37) in tRNA + (sulfur carrier)-H + 5'-deoxyadenosine + L-methionine + A + S-adenosyl-L-homocysteine + 2 H(+). Its function is as follows. Catalyzes the methylthiolation of N6-(dimethylallyl)adenosine (i(6)A), leading to the formation of 2-methylthio-N6-(dimethylallyl)adenosine (ms(2)i(6)A) at position 37 in tRNAs that read codons beginning with uridine. The polypeptide is tRNA-2-methylthio-N(6)-dimethylallyladenosine synthase (Salmonella paratyphi A (strain ATCC 9150 / SARB42)).